A 97-amino-acid chain; its full sequence is Osteocalcin (97 aa).

Positions 1-18 (MKTLAILVLCSLAAICLT) are cleaved as a signal peptide. Positions 19 to 52 (SSASAGAQPAGDSPVQGGLFMEKDQASAVVRQTR) are excised as a propeptide. A Gla domain is found at 53–93 (AAKELTLAQTESLREVCETNMACDEMADAQGIVAAYQAFYG). Glu-63, Glu-67, Glu-70, and Asp-76 together coordinate Ca(2+). 4-carboxyglutamate is present on residues Glu-63, Glu-67, and Glu-70. Cys-69 and Cys-75 form a disulfide bridge. Glu-77 bears the 4-carboxyglutamate mark.

Belongs to the osteocalcin/matrix Gla protein family. In terms of processing, gamma-carboxyglutamate residues are formed by vitamin K dependent carboxylation by GGCX. These residues are essential for the binding of calcium. In the branchial arches, BGP is found outside the chondrocyte-containing zone. It is found in some cells in the basal zone of the branchial filaments, near the branchial arches, and within the extracellular matrix in the medial zone. In the vertebra, BGP is found in the mineralized bone matrix.

The protein resides in the secreted. Functionally, the carboxylated form is one of the main organic components of the bone matrix, which constitutes 1-2% of the total bone protein. The carboxylated form binds strongly to apatite and calcium. This chain is Osteocalcin (bglap), found in Argyrosomus regius (Meagre).